A 1382-amino-acid chain; its full sequence is Y' element ATP-dependent helicase protein 1 copy 4 (1382 aa).

The region spanning 383–560 (EIYMADTPSV…LQRIGLTGLA (178 aa)) is the Helicase ATP-binding domain. 396–403 (APPGYGKT) provides a ligand contact to ATP. A Helicase C-terminal domain is found at 617-766 (KLLLALFEIE…EFYGLESKKG (150 aa)). 2 disordered regions span residues 840-864 (ANAS…NVRT) and 880-1007 (TTES…DINK). A compositionally biased stretch (low complexity) spans 880–983 (TTESTNSSTN…ATTTESTNAS (104 aa)). Basic and acidic residues predominate over residues 984 to 1007 (AKEDANKDGNAEDNRFHPVTDINK).

Belongs to the helicase family. Yeast subtelomeric Y' repeat subfamily.

In terms of biological role, catalyzes DNA unwinding and is involved in telomerase-independent telomere maintenance. This chain is Y' element ATP-dependent helicase protein 1 copy 4 (YRF1-4), found in Saccharomyces cerevisiae (strain ATCC 204508 / S288c) (Baker's yeast).